The following is a 665-amino-acid chain: Protein phosphatase 1 regulatory subunit 21 (665 aa).

Coiled-coil stretches lie at residues 1–84, 125–206, 426–477, and 586–627; these read MTDL…SESK, LEAQ…RKYQ, ESRE…EAQV, and KRLA…EDQL.

Component of the FERRY complex.

It localises to the early endosome. Its function is as follows. Component of the FERRY complex (Five-subunit Endosomal Rab5 and RNA/ribosome intermediary). The FERRY complex directly interacts with mRNAs and RAB5A, and functions as a RAB5A effector involved in the localization and the distribution of specific mRNAs most likely by mediating their endosomal transport. The complex recruits mRNAs and ribosomes to early endosomes through direct mRNA-interaction. Putative regulator of protein phosphatase 1 (PP1) activity. May play a role in the endosomal sorting process or in endosome maturation pathway. The polypeptide is Protein phosphatase 1 regulatory subunit 21 (ppp1r21) (Danio rerio (Zebrafish)).